We begin with the raw amino-acid sequence, 1521 residues long: Lysophospholipase NTE1 (1521 aa).

The Cytoplasmic portion of the chain corresponds to 1-50; the sequence is MDVVNSTARAAVTSATAVTAVTGTGDRHPNPLSSAVAAASDVANAHGSSS. The helical transmembrane segment at 51–71 threads the bilayer; that stretch reads WLGLFARVVLWLLQFVSMVLY. Residues 72-96 are Lumenal-facing; the sequence is YAIKLATISVPTLLYTLFSTSLTVT. A helical transmembrane segment spans residues 97 to 117; it reads MNATTLMLIVAAMIGAISWVV. Topologically, residues 118–1521 are cytoplasmic; that stretch reads RYRYLNMYSR…RTMAPRRASI (1404 aa). Disordered stretches follow at residues 280 to 301, 315 to 372, and 738 to 768; these read HADE…PNYP, SVPN…SAHP, and HAMD…KVDD. Composition is skewed to polar residues over residues 316–334 and 738–753; these read VPNT…NNLP and HAMD…QRSP. Residues 670 to 789 and 837 to 957 each bind a nucleoside 3',5'-cyclic phosphate; these read PASP…GGLA and RLTN…IASR. The PNPLA domain occupies 1217–1381; it reads LVLGGGGARG…VDNLTVSHMK (165 aa). The GXGXXG signature appears at 1221 to 1226; sequence GGGARG. The short motif at 1248-1252 is the GXSXG element; sequence GTSIG. S1250 (nucleophile) is an active-site residue. The Proton acceptor role is filled by D1368. The DGA/G signature appears at 1368–1370; the sequence is DGG.

This sequence belongs to the NTE family.

The protein resides in the endoplasmic reticulum membrane. The catalysed reaction is a 1-acyl-sn-glycero-3-phosphocholine + H2O = sn-glycerol 3-phosphocholine + a fatty acid + H(+). With respect to regulation, inhibited by organophosphorus esters. In terms of biological role, intracellular phospholipase B that catalyzes the double deacylation of phosphatidylcholine (PC) to glycerophosphocholine (GroPCho). Plays an important role in membrane lipid homeostasis. Responsible for the rapid PC turnover in response to inositol, elevated temperatures, or when choline is present in the growth medium. The protein is Lysophospholipase NTE1 (NTE1) of Chaetomium globosum (strain ATCC 6205 / CBS 148.51 / DSM 1962 / NBRC 6347 / NRRL 1970) (Soil fungus).